The following is a 399-amino-acid chain: Acetate kinase 2 (399 aa).

N10 provides a ligand contact to Mg(2+). K17 serves as a coordination point for ATP. R89 contacts substrate. The Proton donor/acceptor role is filled by D146. ATP contacts are provided by residues 206 to 210 (HLGNG), 281 to 283 (DCR), and 329 to 333 (GIGEN). E384 provides a ligand contact to Mg(2+).

The protein belongs to the acetokinase family. As to quaternary structure, homodimer. Mg(2+) serves as cofactor. Mn(2+) is required as a cofactor.

Its subcellular location is the cytoplasm. The catalysed reaction is acetate + ATP = acetyl phosphate + ADP. The protein operates within metabolic intermediate biosynthesis; acetyl-CoA biosynthesis; acetyl-CoA from acetate: step 1/2. Catalyzes the formation of acetyl phosphate from acetate and ATP. Can also catalyze the reverse reaction. This Neisseria meningitidis serogroup B (strain ATCC BAA-335 / MC58) protein is Acetate kinase 2.